Consider the following 711-residue polypeptide: Hydroperoxide isomerase ALOXE3 (711 aa).

Residues 2-119 enclose the PLAT domain; the sequence is AVYRLCVTTG…TVELRPGTAR (118 aa). A Lipoxygenase domain is found at 119-711; it reads RTICQDALPL…PPLIENSVSI (593 aa). Fe cation contacts are provided by histidine 408, histidine 413, histidine 588, asparagine 592, and isoleucine 711.

It belongs to the lipoxygenase family. Fe cation serves as cofactor.

It is found in the cytoplasm. It catalyses the reaction a hydroperoxyeicosatetraenoate = a hydroxy-epoxy-eicosatetraenoate. The catalysed reaction is a hydroperoxyeicosatetraenoate = an oxoeicosatetraenoate + H2O. The enzyme catalyses (12R)-hydroperoxy-(5Z,8Z,10E,14Z)-eicosatetraenoate = (8R)-hydroxy-(11R,12R)-epoxy-(5Z,9E,14Z)-eicosatrienoate. It carries out the reaction (12S)-hydroperoxy-(5Z,8Z,10E,14Z)-eicosatetraenoate = (8R)-hydroxy-(11S,12S)-epoxy-(5Z,9E,14Z)-eicosatrienoate. It catalyses the reaction (12S)-hydroperoxy-(5Z,8Z,10E,14Z)-eicosatetraenoate = (10R)-hydroxy-(11S,12S)-epoxy-(5Z,8Z,14Z)-eicosatrienoate. The catalysed reaction is (15S)-hydroperoxy-(5Z,8Z,11Z,13E)-eicosatetraenoate = (13R)-hydroxy-(14S,15S)-epoxy-(5Z,8Z,11Z)-eicosatrienoate. The enzyme catalyses (5S)-hydroperoxy-(6E,8Z,11Z,14Z)-eicosatetraenoate = 7R-hydroxy-5S,6S-epoxy-(8Z,11Z,14Z)-eicosatrienoate. It carries out the reaction (13S)-hydroperoxy-(9Z,11E)-octadecadienoate = 11-hydroxy-(12S,13S)-epoxy-(9Z)-octadecenoate. It catalyses the reaction N-[omega-(9R)-hydroperoxy-(10E,12Z)-octadecadienoyloxy]acyl-beta-D-glucosyl-(1&lt;-&gt;1)-octadecasphing-4E-enine = a N-[omega-(9R,10R)-epoxy-(13R)-hydroxy-(11E)-octadecenoyloxy]acyl-beta-D-glucosyl-(1&lt;-&gt;1)-sphing-4E-enine. The catalysed reaction is a N-[omega-(9R)-hydroperoxy-(10E,12Z)-octadecadienoyloxy]-acylsphin-4E-enine = a N-[omega-(9R,10R)-epoxy-(13R)-hydroxy-(11E)-octadecenoyloxy]-acylsphing-4E-enine. The enzyme catalyses (12R)-hydroperoxy-(5Z,8Z,10E,14Z)-eicosatetraenoate = 12-oxo-(5Z,8Z,10E,14Z)-eicosatetraenoate + H2O. It carries out the reaction (12S)-hydroperoxy-(5Z,8Z,10E,14Z)-eicosatetraenoate = 12-oxo-(5Z,8Z,10E,14Z)-eicosatetraenoate + H2O. It catalyses the reaction (15S)-hydroperoxy-(5Z,8Z,11Z,13E)-eicosatetraenoate = 15-oxo-(5Z,8Z,11Z,13E)-eicosatetraenoate + H2O. The catalysed reaction is (13S)-hydroperoxy-(9Z,11E)-octadecadienoate = 13-oxo-(9Z,11E)-octadecadienoate + H2O. The enzyme catalyses (8S)-hydroperoxy-(5Z,9E,11Z,14Z)-eicosatetraenoate = (10R)-hydroxy-(8S,9S)-epoxy-(5Z,11Z,14Z)-eicosatrienoate. It carries out the reaction (8R)-hydroperoxy-(5Z,9E,11Z,14Z)-eicosatetraenoate = 8-oxo-(5Z,9E,11Z,14Z)-eicosatetraenoate + H2O. It catalyses the reaction (8S)-hydroperoxy-(5Z,9E,11Z,14Z)-eicosatetraenoate = 8-oxo-(5Z,9E,11Z,14Z)-eicosatetraenoate + H2O. It functions in the pathway lipid metabolism; hydroperoxy eicosatetraenoic acid biosynthesis. The protein operates within lipid metabolism; sphingolipid metabolism. Non-heme iron-containing lipoxygenase which is atypical in that it displays a prominent hydroperoxide isomerase activity and a reduced lipoxygenases activity. The hydroperoxide isomerase activity catalyzes the isomerization of hydroperoxides, derived from arachidonic and linoleic acid by ALOX12B, into hepoxilin-type epoxyalcohols and ketones. In presence of oxygen, oxygenates polyunsaturated fatty acids, including arachidonic acid, to produce fatty acid hydroperoxides. In the skin, acts downstream of ALOX12B on the linoleate moiety of esterified omega-hydroxyacyl-sphingosine (EOS) ceramides to produce an epoxy-ketone derivative, a crucial step in the conjugation of omega-hydroxyceramide to membrane proteins. Therefore plays a crucial role in the synthesis of corneocytes lipid envelope and the establishment of the skin barrier to water loss. In parallel, it may have a signaling function in barrier formation through the production of hepoxilins metabolites. Also plays a role in adipocyte differentiation through hepoxilin A3 and hepoxilin B3 production which in turn activate PPARG. Through the production of hepoxilins in the spinal cord, it may regulate inflammatory tactile allodynia. The polypeptide is Hydroperoxide isomerase ALOXE3 (Rattus norvegicus (Rat)).